The sequence spans 401 residues: Probable tRNA sulfurtransferase (401 aa).

The 106-residue stretch at 60-165 (EPIIDKLKNV…QEGTYITCHD (106 aa)) folds into the THUMP domain. Residues 183–184 (ML), 208–209 (HF), Arg265, Gly287, and Gln296 each bind ATP.

It belongs to the ThiI family.

The protein resides in the cytoplasm. It catalyses the reaction [ThiI sulfur-carrier protein]-S-sulfanyl-L-cysteine + a uridine in tRNA + 2 reduced [2Fe-2S]-[ferredoxin] + ATP + H(+) = [ThiI sulfur-carrier protein]-L-cysteine + a 4-thiouridine in tRNA + 2 oxidized [2Fe-2S]-[ferredoxin] + AMP + diphosphate. It carries out the reaction [ThiS sulfur-carrier protein]-C-terminal Gly-Gly-AMP + S-sulfanyl-L-cysteinyl-[cysteine desulfurase] + AH2 = [ThiS sulfur-carrier protein]-C-terminal-Gly-aminoethanethioate + L-cysteinyl-[cysteine desulfurase] + A + AMP + 2 H(+). Its pathway is cofactor biosynthesis; thiamine diphosphate biosynthesis. In terms of biological role, catalyzes the ATP-dependent transfer of a sulfur to tRNA to produce 4-thiouridine in position 8 of tRNAs, which functions as a near-UV photosensor. Also catalyzes the transfer of sulfur to the sulfur carrier protein ThiS, forming ThiS-thiocarboxylate. This is a step in the synthesis of thiazole, in the thiamine biosynthesis pathway. The sulfur is donated as persulfide by IscS. In Geobacillus sp. (strain WCH70), this protein is Probable tRNA sulfurtransferase.